The following is a 485-amino-acid chain: Glutamyl-tRNA(Gln) amidotransferase subunit A (485 aa).

Active-site charge relay system residues include K78 and S153. S177 serves as the catalytic Acyl-ester intermediate.

The protein belongs to the amidase family. GatA subfamily. As to quaternary structure, heterotrimer of A, B and C subunits.

It carries out the reaction L-glutamyl-tRNA(Gln) + L-glutamine + ATP + H2O = L-glutaminyl-tRNA(Gln) + L-glutamate + ADP + phosphate + H(+). Its function is as follows. Allows the formation of correctly charged Gln-tRNA(Gln) through the transamidation of misacylated Glu-tRNA(Gln) in organisms which lack glutaminyl-tRNA synthetase. The reaction takes place in the presence of glutamine and ATP through an activated gamma-phospho-Glu-tRNA(Gln). This is Glutamyl-tRNA(Gln) amidotransferase subunit A from Trichlorobacter lovleyi (strain ATCC BAA-1151 / DSM 17278 / SZ) (Geobacter lovleyi).